Reading from the N-terminus, the 465-residue chain is Cysteine--tRNA ligase (465 aa).

Cys-29 serves as a coordination point for Zn(2+). Positions 31 to 41 match the 'HIGH' region motif; the sequence is PTVYNYIHIGN. Zn(2+) contacts are provided by Cys-209, His-234, and Glu-238. A 'KMSKS' region motif is present at residues 266 to 270; the sequence is KMSKS. Lys-269 is an ATP binding site. Ser-270 is modified (phosphoserine).

It belongs to the class-I aminoacyl-tRNA synthetase family. In terms of assembly, monomer. It depends on Zn(2+) as a cofactor.

The protein resides in the cytoplasm. It catalyses the reaction tRNA(Cys) + L-cysteine + ATP = L-cysteinyl-tRNA(Cys) + AMP + diphosphate. The protein is Cysteine--tRNA ligase of Bacillus anthracis (strain A0248).